We begin with the raw amino-acid sequence, 172 residues long: Thioredoxin M-type, chloroplastic (172 aa).

Residues 1–60 constitute a chloroplast transit peptide; the sequence is MALESLFKSIHTKTSLSSSIVFIFKGKACLLTSKSRIQESFAELNSFTSLVLLIENHVLL. Positions 61–172 constitute a Thioredoxin domain; it reads HAREAVNEVQ…TLSEKVEKYI (112 aa). Residues cysteine 97 and cysteine 100 each act as nucleophile in the active site. Cysteine 97 and cysteine 100 are oxidised to a cystine.

This sequence belongs to the thioredoxin family. Plant M-type subfamily. As to quaternary structure, forms a complex with heterodimeric ferredoxin-thioredoxin reductase (FTR) and ferredoxin.

It is found in the plastid. The protein localises to the chloroplast. Its function is as follows. Participates in various redox reactions through the reversible oxidation of the active center dithiol to a disulfide. The M form is known to activate NADP-malate dehydrogenase. This Pisum sativum (Garden pea) protein is Thioredoxin M-type, chloroplastic.